A 238-amino-acid polypeptide reads, in one-letter code: MESTSNPTVSFLGIDFDLTILAMSLLTITIIFILVFWASRKMTIKPKGKQNVLEYVYELVNNTISQNLGHYTKNYSLLMFILFSFVFVANNLGLMTSLKTHEHNFWTSPTANFGVDITLSLLVAFICHIEGIRKKGIGGYLKGFLSPTPAMLPMNLLEEVTNVASLALRLFGNIFSGEVVTGLLLQLAVLSPFTGPLAFALNIVWTAFSMFIGFIQAYVFIILSSSYIGHKVHGDEEE.

5 helical membrane-spanning segments follow: residues 18–38 (LTIL…VFWA), 75–95 (YSLL…LGLM), 112–132 (NFGV…IEGI), 179–199 (VVTG…PLAF), and 203–223 (IVWT…FIIL).

This sequence belongs to the ATPase A chain family. F-type ATPases have 2 components, CF(1) - the catalytic core - and CF(0) - the membrane proton channel. CF(1) has five subunits: alpha(3), beta(3), gamma(1), delta(1), epsilon(1). CF(0) has three main subunits: a(1), b(2) and c(9-12). The alpha and beta chains form an alternating ring which encloses part of the gamma chain. CF(1) is attached to CF(0) by a central stalk formed by the gamma and epsilon chains, while a peripheral stalk is formed by the delta and b chains.

Its subcellular location is the cell membrane. In terms of biological role, key component of the proton channel; it plays a direct role in the translocation of protons across the membrane. This is ATP synthase subunit a from Streptococcus agalactiae serotype III (strain NEM316).